A 212-amino-acid chain; its full sequence is Cytochrome c biogenesis ATP-binding export protein CcmA (212 aa).

The 203-residue stretch at 7–209 (LSLQNLSCQR…HLQKLNLAAY (203 aa)) folds into the ABC transporter domain. Position 39–46 (39–46 (GHNGIGKT)) interacts with ATP.

This sequence belongs to the ABC transporter superfamily. CcmA exporter (TC 3.A.1.107) family. The complex is composed of two ATP-binding proteins (CcmA) and two transmembrane proteins (CcmB).

Its subcellular location is the cell inner membrane. The enzyme catalyses heme b(in) + ATP + H2O = heme b(out) + ADP + phosphate + H(+). In terms of biological role, part of the ABC transporter complex CcmAB involved in the biogenesis of c-type cytochromes; once thought to export heme, this seems not to be the case, but its exact role is uncertain. Responsible for energy coupling to the transport system. In Haemophilus influenzae (strain ATCC 51907 / DSM 11121 / KW20 / Rd), this protein is Cytochrome c biogenesis ATP-binding export protein CcmA.